The sequence spans 229 residues: Beta-nerve growth factor (229 aa).

The signal sequence occupies residues 1 to 6 (LIGIQA). The propeptide occupies 7–109 (EPHTESNVPA…SFNRTHRSKR (103 aa)). Residues N57, N102, and N154 are each glycosylated (N-linked (GlcNAc...) asparagine). The interval 77–112 (FSTQPPPVAADTQDPDLEASGAASFNRTHRSKRSSS) is disordered. 3 disulfide bridges follow: C124/C189, C167/C217, and C177/C219. Y161 and K197 together coordinate a 1-acyl-sn-glycero-3-phospho-(1D-myo-inositol). Residue K197 participates in a 1-acyl-sn-glycero-3-phospho-L-serine binding.

It belongs to the NGF-beta family. In terms of assembly, homodimer. The homodimer interacts with a single NTRK1 chain. The homodimer interacts with a single NGFR chain. The NGF dimer interacts with a single SORCS2 chain (via extracellular domain). The NGF precursor (proNGF) binds to a receptor complex formed by SORT1 and NGFR, which leads to NGF endocytosis. Both mature NGF and the immature NGF precursor (proNGF) interact with SORCS2 and with the heterodimer formed by SORCS2 and NGFR (via extracellular domains). The NGF precursor (proNGF) has much higher affinity for SORCS2 than mature NGF. The NGF precursor (proNGF) has much higher affinity for SORT1 than mature NGF. Interacts with ADAM10 in a divalent cation-dependent manner. Interacts with SORCS3.

It is found in the secreted. The protein localises to the endosome lumen. Its function is as follows. Nerve growth factor is important for the development and maintenance of the sympathetic and sensory nervous systems. Extracellular ligand for the NTRK1 and NGFR receptors, activates cellular signaling cascades to regulate neuronal proliferation, differentiation and survival. The immature NGF precursor (proNGF) functions as a ligand for the heterodimeric receptor formed by SORCS2 and NGFR, and activates cellular signaling cascades that lead to inactivation of RAC1 and/or RAC2, reorganization of the actin cytoskeleton and neuronal growth cone collapse. In contrast to mature NGF, the precursor form (proNGF) promotes neuronal apoptosis (in vitro). Inhibits metalloproteinase-dependent proteolysis of platelet glycoprotein VI. Binds lysophosphatidylinositol and lysophosphatidylserine between the two chains of the homodimer. The lipid-bound form promotes histamine relase from mast cells, contrary to the lipid-free form. The polypeptide is Beta-nerve growth factor (NGF) (Sus scrofa (Pig)).